The following is a 350-amino-acid chain: Phenylalanine--tRNA ligase alpha subunit (350 aa).

Glu-262 provides a ligand contact to Mg(2+).

It belongs to the class-II aminoacyl-tRNA synthetase family. Phe-tRNA synthetase alpha subunit type 1 subfamily. As to quaternary structure, tetramer of two alpha and two beta subunits. Mg(2+) serves as cofactor.

Its subcellular location is the cytoplasm. It carries out the reaction tRNA(Phe) + L-phenylalanine + ATP = L-phenylalanyl-tRNA(Phe) + AMP + diphosphate + H(+). The sequence is that of Phenylalanine--tRNA ligase alpha subunit (pheS) from Thermus thermophilus (strain ATCC 27634 / DSM 579 / HB8).